A 444-amino-acid polypeptide reads, in one-letter code: Putative permease IIC component YwbA (444 aa).

A PTS EIIC type-3 domain is found at 8-421 (MEEKIMPVAG…LITCAIYYPF (414 aa)). Transmembrane regions (helical) follow at residues 31-51 (GIIL…LTSL), 72-92 (LGYP…FGIA), 104-124 (LSAG…EVPF), 138-158 (GIPI…IALF), 187-207 (FVAL…RLLI), 223-243 (LGTP…AEFV), 246-266 (LLWS…APIW), 291-311 (FFQI…VLTM), 349-371 (PLLI…IGMS), and 402-422 (SGAV…YPFF).

The protein localises to the cell membrane. Its function is as follows. The phosphoenolpyruvate-dependent sugar phosphotransferase system (PTS), a major carbohydrate active -transport system, catalyzes the phosphorylation of incoming sugar substrates concomitant with their translocation across the cell membrane. This is Putative permease IIC component YwbA (ywbA) from Bacillus subtilis (strain 168).